Reading from the N-terminus, the 443-residue chain is KICSTOR complex protein ITFG2 (443 aa).

Residues 19 to 48 (FPHAICLGDVDNDALNELVVGDTSGKLSVY) form an FG-GAP 1; atypical repeat. At serine 104 the chain carries Phosphoserine. One copy of the FG-GAP 2; atypical repeat lies at 125 to 154 (NTKVMLISDIDGDGCYELVVGYTDRVVRAF). A Phosphoserine modification is found at serine 219.

Part of the KICSTOR complex composed of KPTN, ITFG2, KICS2 and SZT2. SZT2 probably serves as a link between the other three proteins in the KICSTOR complex and may mediate the direct interaction with the GATOR complex via GATOR1. The KICSTOR complex interacts directly with the GATOR1 complex and most probably indirectly with the GATOR2 complex in an amino acid-independent manner.

It is found in the lysosome membrane. Its function is as follows. As part of the KICSTOR complex functions in the amino acid-sensing branch of the TORC1 signaling pathway. Recruits, in an amino acid-independent manner, the GATOR1 complex to the lysosomal membranes and allows its interaction with GATOR2 and the RAG GTPases. Functions upstream of the RAG GTPases and is required to negatively regulate mTORC1 signaling in absence of amino acids. In absence of the KICSTOR complex mTORC1 is constitutively localized to the lysosome and activated. The KICSTOR complex is also probably involved in the regulation of mTORC1 by glucose. The protein is KICSTOR complex protein ITFG2 of Mus musculus (Mouse).